The primary structure comprises 51 residues: Insulin (51 aa).

Cystine bridges form between cysteine 7–cysteine 36, cysteine 19–cysteine 49, and cysteine 35–cysteine 40.

The protein belongs to the insulin family. Heterodimer of a B chain and an A chain linked by two disulfide bonds.

It localises to the secreted. In terms of biological role, insulin decreases blood glucose concentration. It increases cell permeability to monosaccharides, amino acids and fatty acids. It accelerates glycolysis, the pentose phosphate cycle, and glycogen synthesis in liver. The polypeptide is Insulin (INS) (Myocastor coypus (Coypu)).